We begin with the raw amino-acid sequence, 607 residues long: Polyadenylate-binding protein 1-like (607 aa).

RRM domains lie at 11–89 (SSLY…WSHR), 99–175 (GNIF…HFKS), 191–268 (TNIY…RAQK), and 294–370 (VNLY…LAQR). Residues 523–600 (HQPLTVSMLA…AVAVLQVHRE (78 aa)) enclose the PABC domain.

It belongs to the polyadenylate-binding protein type-1 family. Expressed in ovary and testis.

The protein resides in the cytoplasm. In terms of biological role, poly(A)-binding protein involved in oocyte maturation and early embryo development. It is required for cytosolic mRNA polyadenylation and translational activation of maternally stored mRNA in oocytes. In Mus musculus (Mouse), this protein is Polyadenylate-binding protein 1-like.